The chain runs to 117 residues: UPF0321 protein PJ695.01c (117 aa).

The first 17 residues, 1–17 (MLLLLYICCLFLKFILA), serve as a signal peptide directing secretion. 4 N-linked (GlcNAc...) asparagine glycosylation sites follow: Asn-39, Asn-65, Asn-71, and Asn-104.

This sequence belongs to the UPF0321 family.

This is UPF0321 protein PJ695.01c from Schizosaccharomyces pombe (strain 972 / ATCC 24843) (Fission yeast).